The following is a 190-amino-acid chain: MADSIIQSPELGDVTGYLRERIRTVPDWPMPGVMFRDITPLLQNPKTLRVLIDVFVHRYMDAQLDLVAGIDARGFILGAIVAYELNLGFVPIRKKGKLPFQTVAEEYELEYGSATVEIHADACKSGDRVLLVDDLIATGGTMMAGLKLLERLGATVVEGAAIVDLPELGGSKLLQDGGLPLFTVCKFEGH.

The protein belongs to the purine/pyrimidine phosphoribosyltransferase family. As to quaternary structure, homodimer.

The protein resides in the cytoplasm. It carries out the reaction AMP + diphosphate = 5-phospho-alpha-D-ribose 1-diphosphate + adenine. The protein operates within purine metabolism; AMP biosynthesis via salvage pathway; AMP from adenine: step 1/1. In terms of biological role, catalyzes a salvage reaction resulting in the formation of AMP, that is energically less costly than de novo synthesis. This chain is Adenine phosphoribosyltransferase, found in Cupriavidus necator (strain ATCC 17699 / DSM 428 / KCTC 22496 / NCIMB 10442 / H16 / Stanier 337) (Ralstonia eutropha).